A 275-amino-acid chain; its full sequence is Large ribosomal subunit protein uL2 (275 aa).

A disordered region spans residues 223–275; it reads VAMNPVDHPHGGGEGRTSGGRHPVSPWGQPTKGYKTRSNKRTDKYIVRRRNKK.

The protein belongs to the universal ribosomal protein uL2 family. As to quaternary structure, part of the 50S ribosomal subunit. Forms a bridge to the 30S subunit in the 70S ribosome.

In terms of biological role, one of the primary rRNA binding proteins. Required for association of the 30S and 50S subunits to form the 70S ribosome, for tRNA binding and peptide bond formation. It has been suggested to have peptidyltransferase activity; this is somewhat controversial. Makes several contacts with the 16S rRNA in the 70S ribosome. The chain is Large ribosomal subunit protein uL2 from Shewanella halifaxensis (strain HAW-EB4).